The sequence spans 291 residues: Geranyl diphosphate 2-C-methyltransferase (291 aa).

This sequence belongs to the geranyl diphosphate 2-C-methyltransferase family. The cofactor is Mg(2+).

The enzyme catalyses (2E)-geranyl diphosphate + S-adenosyl-L-methionine = (E)-2-methylgeranyl diphosphate + S-adenosyl-L-homocysteine + H(+). In terms of biological role, catalyzes the SAM-dependent methylation of geranyl diphosphate (GPP) to yield (E)-2-methylgeranyl diphosphate (2-MeGPP). This is Geranyl diphosphate 2-C-methyltransferase from Streptomyces ambofaciens (strain ATCC 23877 / 3486 / DSM 40053 / JCM 4204 / NBRC 12836 / NRRL B-2516).